The following is a 558-amino-acid chain: Arginine--tRNA ligase (558 aa).

A 'HIGH' region motif is present at residues 119–129; the sequence is PNIAKPMSMGH.

It belongs to the class-I aminoacyl-tRNA synthetase family. Monomer.

Its subcellular location is the cytoplasm. The catalysed reaction is tRNA(Arg) + L-arginine + ATP = L-arginyl-tRNA(Arg) + AMP + diphosphate. This is Arginine--tRNA ligase from Lactobacillus johnsonii (strain CNCM I-12250 / La1 / NCC 533).